The primary structure comprises 299 residues: tRNA dimethylallyltransferase (299 aa).

Residue 11-18 (GPTAVGKT) participates in ATP binding. 13–18 (TAVGKT) is a binding site for substrate. Positions 36 to 39 (DSQQ) are interaction with substrate tRNA.

This sequence belongs to the IPP transferase family. Monomer. Mg(2+) serves as cofactor.

It carries out the reaction adenosine(37) in tRNA + dimethylallyl diphosphate = N(6)-dimethylallyladenosine(37) in tRNA + diphosphate. In terms of biological role, catalyzes the transfer of a dimethylallyl group onto the adenine at position 37 in tRNAs that read codons beginning with uridine, leading to the formation of N6-(dimethylallyl)adenosine (i(6)A). In Streptococcus pyogenes serotype M49 (strain NZ131), this protein is tRNA dimethylallyltransferase.